The following is a 444-amino-acid chain: MISSKNDDIAAIATAHGIGSICIIRLSGSTALQSALKLTKISNLSPRLATLTKIYSLDKEFLDEAIMIYFKAPASFTGEDVVEFHTHGGFVVADMILNELVKLGVRLAEPGEFSKRAFLNDKLDLAKAEAIQGLINSRSEAAAKILARQMRGDLSRYVEQMRNELVKTLAFVETSIDYADDDLPDDLLEQIKTMLEANAAKLDKIVQISEQRRGLIDGFKVAIVGKPNVGKSSILNSLLSYERAIISDEAGTTRDRIEENFKVGTHLVRIIDTAGIRKNAGKIEKIGIRYSLAAIEEADIVLAVFDSSSASDEQDERIVELVKNSGKKVFFILNKSDLAFKFDLDLSPSIKISAKKGADEIVGRLRDYLDSQDSSEMMLSSNHQIKQCKDASVAIKRALNLLGDELELFAYEINTAIAAISAITRSFERSEILDEMFSHFCLGK.

(6S)-5-formyl-5,6,7,8-tetrahydrofolate is bound by residues Arg25, Glu83, and Lys122. Positions 218 to 370 (GFKVAIVGKP…IVGRLRDYLD (153 aa)) constitute a TrmE-type G domain. Residues 228 to 233 (NVGKSS), 247 to 253 (SDEAGTT), and 272 to 275 (DTAG) each bind GTP. Mg(2+) is bound by residues Ser232 and Thr253. Lys444 contributes to the (6S)-5-formyl-5,6,7,8-tetrahydrofolate binding site.

It belongs to the TRAFAC class TrmE-Era-EngA-EngB-Septin-like GTPase superfamily. TrmE GTPase family. In terms of assembly, homodimer. Heterotetramer of two MnmE and two MnmG subunits. The cofactor is K(+).

The protein resides in the cytoplasm. Functionally, exhibits a very high intrinsic GTPase hydrolysis rate. Involved in the addition of a carboxymethylaminomethyl (cmnm) group at the wobble position (U34) of certain tRNAs, forming tRNA-cmnm(5)s(2)U34. This is tRNA modification GTPase MnmE from Campylobacter curvus (strain 525.92).